Consider the following 607-residue polypeptide: UvrABC system protein C (607 aa).

Residues 16-94 (GRPGVYRMFD…IKEWRPPYNI (79 aa)) form the GIY-YIG domain. Residues 203-238 (QQLGNELNAEMEKAAMALNFEKAAELRDQIALLRRV) enclose the UVR domain.

This sequence belongs to the UvrC family. In terms of assembly, interacts with UvrB in an incision complex.

Its subcellular location is the cytoplasm. Functionally, the UvrABC repair system catalyzes the recognition and processing of DNA lesions. UvrC both incises the 5' and 3' sides of the lesion. The N-terminal half is responsible for the 3' incision and the C-terminal half is responsible for the 5' incision. The chain is UvrABC system protein C from Pseudomonas entomophila (strain L48).